A 227-amino-acid polypeptide reads, in one-letter code: Probable cell wall protein PGA42 (227 aa).

An N-terminal signal peptide occupies residues 1 to 16; the sequence is MKFIILLFALIHITVA. Asn-192 carries N-linked (GlcNAc...) asparagine glycosylation. Ser-200 carries the GPI-anchor amidated serine lipid modification. The propeptide at 201-227 is removed in mature form; the sequence is GSQIFVLCVISVVGFIFFFLFFLSLFV.

It belongs to the IHD1 family. The GPI-anchor is attached to the protein in the endoplasmic reticulum and serves to target the protein to the cell surface. There, the glucosamine-inositol phospholipid moiety is cleaved off and the GPI-modified mannoprotein is covalently attached via its lipidless GPI glycan remnant to the 1,6-beta-glucan of the outer cell wall layer.

The protein resides in the secreted. The protein localises to the cell wall. Its subcellular location is the membrane. In terms of biological role, probable GPI-anchored cell wall protein that may be involved in cell wall organization, hyphal growth, as well as in virulence. In Candida albicans (strain SC5314 / ATCC MYA-2876) (Yeast), this protein is Probable cell wall protein PGA42 (PGA42).